Consider the following 207-residue polypeptide: Dephospho-CoA kinase (207 aa).

Positions 5–207 (IVGLTGGIAS…AALQTHRIEN (203 aa)) constitute a DPCK domain. Residue 13 to 18 (ASGKSA) coordinates ATP.

Belongs to the CoaE family.

Its subcellular location is the cytoplasm. The enzyme catalyses 3'-dephospho-CoA + ATP = ADP + CoA + H(+). It participates in cofactor biosynthesis; coenzyme A biosynthesis; CoA from (R)-pantothenate: step 5/5. Its function is as follows. Catalyzes the phosphorylation of the 3'-hydroxyl group of dephosphocoenzyme A to form coenzyme A. This Xanthomonas campestris pv. campestris (strain ATCC 33913 / DSM 3586 / NCPPB 528 / LMG 568 / P 25) protein is Dephospho-CoA kinase.